We begin with the raw amino-acid sequence, 120 residues long: Aspartate 1-decarboxylase (120 aa).

S25 acts as the Schiff-base intermediate with substrate; via pyruvic acid in catalysis. S25 is subject to Pyruvic acid (Ser). Position 57 (T57) interacts with substrate. The Proton donor role is filled by Y58. 73-75 contributes to the substrate binding site; the sequence is GAA.

The protein belongs to the PanD family. In terms of assembly, heterooctamer of four alpha and four beta subunits. The cofactor is pyruvate. In terms of processing, is synthesized initially as an inactive proenzyme, which is activated by self-cleavage at a specific serine bond to produce a beta-subunit with a hydroxyl group at its C-terminus and an alpha-subunit with a pyruvoyl group at its N-terminus.

The protein resides in the cytoplasm. It catalyses the reaction L-aspartate + H(+) = beta-alanine + CO2. It functions in the pathway cofactor biosynthesis; (R)-pantothenate biosynthesis; beta-alanine from L-aspartate: step 1/1. Catalyzes the pyruvoyl-dependent decarboxylation of aspartate to produce beta-alanine. The polypeptide is Aspartate 1-decarboxylase (Coprothermobacter proteolyticus (strain ATCC 35245 / DSM 5265 / OCM 4 / BT)).